A 152-amino-acid polypeptide reads, in one-letter code: Membrane-spanning 4-domains subfamily A member 13 (152 aa).

Helical transmembrane passes span 1–21 (MIGI…MGQI), 32–52 (TYKT…VFLI), 66–86 (TLII…LTII), and 111–131 (ILLF…IYSC).

The protein belongs to the MS4A family.

It is found in the membrane. May be involved in signal transduction as a component of a multimeric receptor complex. This chain is Membrane-spanning 4-domains subfamily A member 13 (MS4A13), found in Homo sapiens (Human).